A 381-amino-acid polypeptide reads, in one-letter code: Queuine tRNA-ribosyltransferase (381 aa).

Residue D92 is the Proton acceptor of the active site. Substrate is bound by residues 92–96 (DSGGF), D146, Q190, and G217. Residues 248-254 (GVGRPED) are RNA binding. D267 functions as the Nucleophile in the catalytic mechanism. An RNA binding; important for wobble base 34 recognition region spans residues 272–276 (TRNAR). Residues C305, C307, C310, and H337 each contribute to the Zn(2+) site.

The protein belongs to the queuine tRNA-ribosyltransferase family. In terms of assembly, homodimer. Within each dimer, one monomer is responsible for RNA recognition and catalysis, while the other monomer binds to the replacement base PreQ1. Zn(2+) serves as cofactor.

It carries out the reaction 7-aminomethyl-7-carbaguanine + guanosine(34) in tRNA = 7-aminomethyl-7-carbaguanosine(34) in tRNA + guanine. The protein operates within tRNA modification; tRNA-queuosine biosynthesis. In terms of biological role, catalyzes the base-exchange of a guanine (G) residue with the queuine precursor 7-aminomethyl-7-deazaguanine (PreQ1) at position 34 (anticodon wobble position) in tRNAs with GU(N) anticodons (tRNA-Asp, -Asn, -His and -Tyr). Catalysis occurs through a double-displacement mechanism. The nucleophile active site attacks the C1' of nucleotide 34 to detach the guanine base from the RNA, forming a covalent enzyme-RNA intermediate. The proton acceptor active site deprotonates the incoming PreQ1, allowing a nucleophilic attack on the C1' of the ribose to form the product. After dissociation, two additional enzymatic reactions on the tRNA convert PreQ1 to queuine (Q), resulting in the hypermodified nucleoside queuosine (7-(((4,5-cis-dihydroxy-2-cyclopenten-1-yl)amino)methyl)-7-deazaguanosine). This is Queuine tRNA-ribosyltransferase from Xanthomonas euvesicatoria pv. vesicatoria (strain 85-10) (Xanthomonas campestris pv. vesicatoria).